A 283-amino-acid polypeptide reads, in one-letter code: Homeobox-leucine zipper protein HAT2 (283 aa).

The tract at residues 64-134 (VNCEEDTGVS…GETSRKKLRL (71 aa)) is disordered. The span at 73–84 (SSPNSTISSTIS) shows a compositional bias: low complexity. The segment at residues 127–186 (TSRKKLRLSKDQSAFLEETFKEHNTLNPKQKLALAKKLNLTARQVEVWFQNRRARTKLKQ) is a DNA-binding region (homeobox). Residues 194–215 (LKRCVEKLTEENRRLQKEAMEL) form a leucine-zipper region.

Belongs to the HD-ZIP homeobox family. Class II subfamily. As to quaternary structure, interacts with RBR1.

Its subcellular location is the nucleus. In terms of biological role, probable transcription factor that plays a role in auxin-mediated morphogenesis. Negatively regulates lateral root elongation. In Arabidopsis thaliana (Mouse-ear cress), this protein is Homeobox-leucine zipper protein HAT2 (HAT2).